We begin with the raw amino-acid sequence, 279 residues long: Four and a half LIM domains protein 2 (279 aa).

The segment at 7–31 (CHHCNESLYGKKYILKEENPHCVAC) adopts a C4-type zinc-finger fold. LIM zinc-binding domains are found at residues 40–92 (CEEC…CTDC), 101–153 (CQEC…CVPC), and 162–212 (CVQC…CLTC). Lysine 78 is covalently cross-linked (Glycyl lysine isopeptide (Lys-Gly) (interchain with G-Cter in SUMO2)). Glycyl lysine isopeptide (Lys-Gly) (interchain with G-Cter in SUMO2) cross-links involve residues lysine 167 and lysine 220. Positions 221–275 (CAGCTNPISGLGGTKYISFEERQWHNDCFNCKKCSLSLVGRGFLTERDDILCPDC) constitute an LIM zinc-binding 4 domain. Serine 238 carries the phosphoserine modification.

In terms of assembly, interacts with ZNF638 and TTN/titin. Interacts with E4F1. Interacts with GRB7. Interacts with SIRT1 and FOXO1. Interacts with CEFIP and calcineurin. Interacts with FOXK1. Expressed in heart only (at protein level).

It localises to the cytoplasm. The protein localises to the nucleus. The protein resides in the myofibril. It is found in the sarcomere. Its subcellular location is the z line. Its function is as follows. May function as a molecular transmitter linking various signaling pathways to transcriptional regulation. Negatively regulates the transcriptional repressor E4F1 and may function in cell growth. Inhibits the transcriptional activity of FOXO1 and its apoptotic function by enhancing the interaction of FOXO1 with SIRT1 and FOXO1 deacetylation. Negatively regulates the calcineurin/NFAT signaling pathway in cardiomyocytes. In Rattus norvegicus (Rat), this protein is Four and a half LIM domains protein 2 (Fhl2).